A 531-amino-acid polypeptide reads, in one-letter code: High-affinity glucose transporter ght2 (531 aa).

Topologically, residues 5–13 (RGKNFTLVM) are cytoplasmic. Residues 14–34 (LIFVSMAGWMFGADTGSIGGV) traverse the membrane as a helical segment. The Extracellular portion of the chain corresponds to 35-62 (TSMRDFRERYADRYDPITDQYSLSSARQ). Residues 63 to 83 (GLLTGMVNVGSLFGCIISSPI) form a helical membrane-spanning segment. Residues 84–91 (ADRFGKRL) are Cytoplasmic-facing. A helical membrane pass occupies residues 92-112 (SIIGFCAVYIIGIIVQVTAVP). Over 113–116 (SWVQ) the chain is Extracellular. A helical transmembrane segment spans residues 117 to 137 (IMVAKIWTGIGIGALSVLAPG). At 138–148 (YQSETAPPSIR) the chain is on the cytoplasmic side. Residues 149-169 (GTVVVTYQLFVTGGIFIAACI) form a helical membrane-spanning segment. Topologically, residues 170-183 (NMGTHKLHKTAQWR) are extracellular. A helical transmembrane segment spans residues 184 to 204 (VSIGINLLWGIITMIGILFLP). The Cytoplasmic segment spans residues 205-270 (ESPRYLIQVG…IFGKDIRYRT (66 aa)). The helical transmembrane segment at 271–289 (FLGMFVMSLQQLTGNNYFF) threads the bilayer. The Extracellular portion of the chain corresponds to 290 to 305 (YYGFSVMQGAGINSPY). A helical transmembrane segment spans residues 306–326 (LSAMILDAVNFGCTFGGMYVL). Residues 327-332 (ERFGRR) are Cytoplasmic-facing. A helical membrane pass occupies residues 333–353 (NPLIIGGIWQSICFFIYSAVG). Residues 354 to 367 (SRALYHKNGTSNTR) lie on the Extracellular side of the membrane. A glycan (N-linked (GlcNAc...) asparagine) is linked at N361. Residues 368-388 (AGAVMIVMACLFIFGFAQTWA) form a helical membrane-spanning segment. The Cytoplasmic portion of the chain corresponds to 389-408 (PAAYVIVGESYPVRYRSKCA). A helical transmembrane segment spans residues 409-429 (AVATASNWLWNFLISFFTPFI). Topologically, residues 430–436 (QASIGFK) are extracellular. Residues 437–457 (YGYVFASCNLTGAIVIFLFAK) traverse the membrane as a helical segment. Residues 458-531 (ETKGLTLEEI…QYSSHEEDYA (74 aa)) are Cytoplasmic-facing. Residues 491–531 (KKVEKEKSRKGGARGESVEYVERASNTDSSPQYSSHEEDYA) form a disordered region. Residues S507, S515, S519, and S520 each carry the phosphoserine modification. Polar residues predominate over residues 514–524 (ASNTDSSPQYS). Y523 is modified (phosphotyrosine).

It belongs to the major facilitator superfamily. Sugar transporter (TC 2.A.1.1) family.

Its subcellular location is the membrane. Functionally, high-affinity glucose transporter. The polypeptide is High-affinity glucose transporter ght2 (ght2) (Schizosaccharomyces pombe (strain 972 / ATCC 24843) (Fission yeast)).